Reading from the N-terminus, the 96-residue chain is Teretoxin Tan6.14 (96 aa).

The N-terminal stretch at 1 to 21 is a signal peptide; that stretch reads MRPLLVFVLMVSVSLAFSLEG. Residues 22-60 constitute a propeptide that is removed on maturation; that stretch reads MPNNGGDSVASITANQARRFKRNPLFSFAQHSLVDLKAR.

In terms of processing, contains 3 disulfide bonds. As to expression, expressed by the venom duct.

It localises to the secreted. The polypeptide is Teretoxin Tan6.14 (Terebra anilis (Auger snail)).